Reading from the N-terminus, the 164-residue chain is 6,7-dimethyl-8-ribityllumazine synthase (164 aa).

5-amino-6-(D-ribitylamino)uracil-binding positions include phenylalanine 22, 56–58 (AWE), and 80–82 (AVI). A (2S)-2-hydroxy-3-oxobutyl phosphate-binding site is contributed by 85-86 (DT). The Proton donor role is filled by histidine 88. Leucine 113 is a binding site for 5-amino-6-(D-ribitylamino)uracil. Position 127 (arginine 127) interacts with (2S)-2-hydroxy-3-oxobutyl phosphate.

The protein belongs to the DMRL synthase family.

The catalysed reaction is (2S)-2-hydroxy-3-oxobutyl phosphate + 5-amino-6-(D-ribitylamino)uracil = 6,7-dimethyl-8-(1-D-ribityl)lumazine + phosphate + 2 H2O + H(+). Its pathway is cofactor biosynthesis; riboflavin biosynthesis; riboflavin from 2-hydroxy-3-oxobutyl phosphate and 5-amino-6-(D-ribitylamino)uracil: step 1/2. Catalyzes the formation of 6,7-dimethyl-8-ribityllumazine by condensation of 5-amino-6-(D-ribitylamino)uracil with 3,4-dihydroxy-2-butanone 4-phosphate. This is the penultimate step in the biosynthesis of riboflavin. The sequence is that of 6,7-dimethyl-8-ribityllumazine synthase from Gemmatimonas aurantiaca (strain DSM 14586 / JCM 11422 / NBRC 100505 / T-27).